The following is a 687-amino-acid chain: Ataxin-1-like (687 aa).

Residues 1-19 (MKPVHERSQECLPPKKRDL) are compositionally biased toward basic and acidic residues. Disordered regions lie at residues 1–46 (MKPV…SEWS), 185–223 (ATPP…LDLA), and 261–294 (SALE…KGES). An interaction with NCOR2 and ATXN1 region spans residues 20 to 197 (PVTSEDMGRT…PPQAASPAQS (178 aa)). Residues 20–197 (PVTSEDMGRT…PPQAASPAQS (178 aa)) are self-association. Composition is skewed to polar residues over residues 28-43 (RTTS…SDAS) and 198-219 (FNKS…NTQP). A compositionally biased stretch (basic and acidic residues) spans 272 to 283 (RQRERNVRRESE). Phosphoserine is present on S282. Residue T328 is modified to Phosphothreonine. Positions 356-379 (DEPSPLNLSHHNLDHQGEGRGSAR) are disordered. Phosphoserine is present on S359. One can recognise an AXH domain in the interval 455 to 586 (PPPVTSSHLP…SISLQSLNSN (132 aa)). A disordered region spans residues 587 to 649 (SVSQASCAPP…PGAQACWPAP (63 aa)).

The protein belongs to the ATXN1 family. As to quaternary structure, homodimer. Interacts (via AXH domain) with NCOR2. Interacts with ATXN1 and CIC. Directly interacts with RBPJ; this interaction is disrupted in the presence of Notch intracellular domain. Competes with ATXN1 for RBPJ-binding. Found in a complex with CIC and ATXN1. As to expression, expressed in the cortex and hypothalamus (at protein level). Expressed in neuronal cells. Highly expressed in Purkinje cells of cerebellum.

It localises to the nucleus. The protein localises to the cell projection. It is found in the dendrite. Functionally, chromatin-binding factor that repress Notch signaling in the absence of Notch intracellular domain by acting as a CBF1 corepressor. Binds to the HEY promoter and might assist, along with NCOR2, RBPJ-mediated repression. Can suppress the cytotoxicity of ATXN1 in spinocerebellar ataxia type 1 (SCA1). In concert with CIC and ATXN1, involved in brain development. In Mus musculus (Mouse), this protein is Ataxin-1-like (Atxn1l).